The chain runs to 684 residues: Gabija protein GajB (684 aa).

The UvrD-like helicase ATP-binding domain occupies 14–351 (EQKSINAIFN…IEVINKIRND (338 aa)). Residue 35–42 (SGAGAGKT) participates in ATP binding.

It belongs to the helicase family. Homodimer. Interacts with GajA; 2 GajB dimers dock at opposite sides of the GajA complex to form a 4:4 GajA-GajB assembly (GajAB). GajAB interacts with Bacillus phage Phi3T Gad1 protein; this interaction forms a 4:4:8 GajAB-Gad1 complex and leads to GajAB inhibition.

In terms of biological role, component of antiviral defense system Gabija type II, composed of GajA and GajB. Expression of Gabija type II in B.subtilis (strain BEST7003) confers resistance to phages phi105, and SpBeta. May be a helicase or contribute to GajA activation. This Bacillus cereus (strain HuB5-5) protein is Gabija protein GajB.